A 243-amino-acid chain; its full sequence is Ubiquinone/menaquinone biosynthesis C-methyltransferase UbiE (243 aa).

S-adenosyl-L-methionine-binding positions include T69, D90, and 116–117; that span reads DA.

It belongs to the class I-like SAM-binding methyltransferase superfamily. MenG/UbiE family.

The enzyme catalyses a 2-demethylmenaquinol + S-adenosyl-L-methionine = a menaquinol + S-adenosyl-L-homocysteine + H(+). The catalysed reaction is a 2-methoxy-6-(all-trans-polyprenyl)benzene-1,4-diol + S-adenosyl-L-methionine = a 5-methoxy-2-methyl-3-(all-trans-polyprenyl)benzene-1,4-diol + S-adenosyl-L-homocysteine + H(+). The protein operates within quinol/quinone metabolism; menaquinone biosynthesis; menaquinol from 1,4-dihydroxy-2-naphthoate: step 2/2. Its pathway is cofactor biosynthesis; ubiquinone biosynthesis. Functionally, methyltransferase required for the conversion of demethylmenaquinol (DMKH2) to menaquinol (MKH2) and the conversion of 2-polyprenyl-6-methoxy-1,4-benzoquinol (DDMQH2) to 2-polyprenyl-3-methyl-6-methoxy-1,4-benzoquinol (DMQH2). The sequence is that of Ubiquinone/menaquinone biosynthesis C-methyltransferase UbiE from Cupriavidus metallidurans (strain ATCC 43123 / DSM 2839 / NBRC 102507 / CH34) (Ralstonia metallidurans).